The sequence spans 456 residues: UDP-N-acetylmuramate--L-alanine ligase (456 aa).

ATP is bound at residue G114 to T120.

Belongs to the MurCDEF family.

The protein resides in the cytoplasm. It carries out the reaction UDP-N-acetyl-alpha-D-muramate + L-alanine + ATP = UDP-N-acetyl-alpha-D-muramoyl-L-alanine + ADP + phosphate + H(+). The protein operates within cell wall biogenesis; peptidoglycan biosynthesis. In terms of biological role, cell wall formation. In Porphyromonas gingivalis (strain ATCC 33277 / DSM 20709 / CIP 103683 / JCM 12257 / NCTC 11834 / 2561), this protein is UDP-N-acetylmuramate--L-alanine ligase.